A 133-amino-acid polypeptide reads, in one-letter code: Ribonuclease P protein component (133 aa).

The protein belongs to the RnpA family. In terms of assembly, consists of a catalytic RNA component (M1 or rnpB) and a protein subunit.

The catalysed reaction is Endonucleolytic cleavage of RNA, removing 5'-extranucleotides from tRNA precursor.. RNaseP catalyzes the removal of the 5'-leader sequence from pre-tRNA to produce the mature 5'-terminus. It can also cleave other RNA substrates such as 4.5S RNA. The protein component plays an auxiliary but essential role in vivo by binding to the 5'-leader sequence and broadening the substrate specificity of the ribozyme. In Corynebacterium glutamicum (strain ATCC 13032 / DSM 20300 / JCM 1318 / BCRC 11384 / CCUG 27702 / LMG 3730 / NBRC 12168 / NCIMB 10025 / NRRL B-2784 / 534), this protein is Ribonuclease P protein component.